The sequence spans 410 residues: Elongation factor Tu, chloroplastic (410 aa).

Positions 10 to 215 (KPHVNIGTIG…NVDSYIPTPE (206 aa)) constitute a tr-type G domain. Positions 19–26 (GHVDHGKT) are G1. Position 19–26 (19–26 (GHVDHGKT)) interacts with GTP. T26 serves as a coordination point for Mg(2+). Residues 61–65 (GITIN) are G2. The interval 82–85 (DCPG) is G3. Residues 82 to 86 (DCPGH) and 137 to 140 (NKKD) each bind GTP. Positions 137–140 (NKKD) are G4. A G5 region spans residues 175–177 (SAL).

This sequence belongs to the TRAFAC class translation factor GTPase superfamily. Classic translation factor GTPase family. EF-Tu/EF-1A subfamily.

The protein resides in the plastid. The protein localises to the chloroplast. It catalyses the reaction GTP + H2O = GDP + phosphate + H(+). In terms of biological role, GTP hydrolase that promotes the GTP-dependent binding of aminoacyl-tRNA to the A-site of ribosomes during protein biosynthesis. The chain is Elongation factor Tu, chloroplastic (tufA) from Oltmannsiellopsis viridis (Marine flagellate).